The sequence spans 438 residues: Trigger factor (438 aa).

Residues 162 to 247 (GDIVTIDFEG…VKEIKVKELP (86 aa)) enclose the PPIase FKBP-type domain.

Belongs to the FKBP-type PPIase family. Tig subfamily.

Its subcellular location is the cytoplasm. The catalysed reaction is [protein]-peptidylproline (omega=180) = [protein]-peptidylproline (omega=0). Its function is as follows. Involved in protein export. Acts as a chaperone by maintaining the newly synthesized protein in an open conformation. Functions as a peptidyl-prolyl cis-trans isomerase. The protein is Trigger factor of Caldicellulosiruptor saccharolyticus (strain ATCC 43494 / DSM 8903 / Tp8T 6331).